The primary structure comprises 352 residues: Divinyl chlorophyll a/b light-harvesting protein PcbA (352 aa).

Transmembrane regions (helical) follow at residues 27 to 47 (FIAAHVAHAGLIVFWAGAFTL), 90 to 110 (VLAIAIVHLVSSMVLAAGGLL), 142 to 162 (FILGHHLIILGFAVILLVEWA), 203 to 223 (VMGGHAFLAFVLITGGAWHIA), 243 to 263 (AVLSWSLAGIGWMAIIAAFWS), and 306 to 326 (LANVHYYFGFFFIQGHLWHAL).

The protein belongs to the PsbB/PsbC family. IsiA/Pcb subfamily. In terms of assembly, the antenna complex consists of divinyl chlorophylls (a and b) and divinyl chlorophyll a/b binding proteins and binds less divinyl chlorophyll b than does low-light-adapted Prochlorococcus. Also forms complexes with PSII, consisting of a PSII dimer and 4 or 8 PcbA subunits. These complexes are also found under conditions of iron-starvation. Divinyl chlorophyll a serves as cofactor. It depends on divinyl chlorophyll b as a cofactor.

It is found in the cellular thylakoid membrane. Its function is as follows. The antenna complex functions as a light receptor, it captures and delivers excitation energy to photosystem II and possibly to photosystem I. The Prochlorales pcb genes are not related to higher plant LHCs. In Prochlorococcus marinus subsp. pastoris (strain CCMP1986 / NIES-2087 / MED4), this protein is Divinyl chlorophyll a/b light-harvesting protein PcbA (pcbA).